The primary structure comprises 247 residues: tRNA (guanine-N(1)-)-methyltransferase (247 aa).

S-adenosyl-L-methionine is bound by residues Gly113 and 133–138 (IGDFVM).

Belongs to the RNA methyltransferase TrmD family. Homodimer.

It localises to the cytoplasm. The enzyme catalyses guanosine(37) in tRNA + S-adenosyl-L-methionine = N(1)-methylguanosine(37) in tRNA + S-adenosyl-L-homocysteine + H(+). Its function is as follows. Specifically methylates guanosine-37 in various tRNAs. The chain is tRNA (guanine-N(1)-)-methyltransferase from Vibrio cholerae serotype O1 (strain ATCC 39541 / Classical Ogawa 395 / O395).